Here is a 347-residue protein sequence, read N- to C-terminus: 5-formaminoimidazole-4-carboxamide-1-(beta)-D-ribofuranosyl 5'-monophosphate synthetase (347 aa).

5-amino-1-(5-phospho-beta-D-ribosyl)imidazole-4-carboxamide-binding residues include His23 and Ser91. The ATP-grasp domain occupies 112–323 (RKILLWESDQ…YSYLYWDEPM (212 aa)). ATP is bound by residues 142–196 (PDEV…VPAY) and Glu218. A 5-amino-1-(5-phospho-beta-D-ribosyl)imidazole-4-carboxamide-binding site is contributed by Asn244. Mg(2+) is bound by residues Glu283 and Glu296.

Belongs to the phosphohexose mutase family. The cofactor is Mg(2+). Requires Mn(2+) as cofactor.

The catalysed reaction is 5-amino-1-(5-phospho-beta-D-ribosyl)imidazole-4-carboxamide + formate + ATP = 5-formamido-1-(5-phospho-D-ribosyl)imidazole-4-carboxamide + ADP + phosphate. The protein operates within purine metabolism; IMP biosynthesis via de novo pathway; 5-formamido-1-(5-phospho-D-ribosyl)imidazole-4-carboxamide from 5-amino-1-(5-phospho-D-ribosyl)imidazole-4-carboxamide (formate route): step 1/1. In terms of biological role, catalyzes the ATP- and formate-dependent formylation of 5-aminoimidazole-4-carboxamide-1-beta-d-ribofuranosyl 5'-monophosphate (AICAR) to 5-formaminoimidazole-4-carboxamide-1-beta-d-ribofuranosyl 5'-monophosphate (FAICAR) in the absence of folates. In Ignicoccus hospitalis (strain KIN4/I / DSM 18386 / JCM 14125), this protein is 5-formaminoimidazole-4-carboxamide-1-(beta)-D-ribofuranosyl 5'-monophosphate synthetase.